The primary structure comprises 731 residues: Penicillin-binding protein 2a (731 aa).

Over 1–56 (MKLDKLFEKFLSLFKKETSELEDSDSTILRRSRSDRKKLAQVGPIRKFWRRYHLTK) the chain is Cytoplasmic. A helical; Signal-anchor for type II membrane protein transmembrane segment spans residues 57-77 (IILILGLSAGLLVGIYLFAVA). A hydrophobic; associated with cytoplasmic membrane. Required for transglycosylase activity, but not for lipid II binding region spans residues 78-156 (KSTNVNDLQN…FLAIVTAGRS (79 aa)). The segment at 78–300 (KSTNVNDLQN…SQLHDKYEGK (223 aa)) is transglycosylase. At 78-731 (KSTNVNDLQN…IWDSIVNLFR (654 aa)) the chain is on the extracellular side. The Proton donor; for transglycosylase activity role is filled by glutamate 131. The tract at residues 301–731 (ISDYRYPSYF…IWDSIVNLFR (431 aa)) is transpeptidase. The Acyl-ester intermediate; for transpeptidase activity role is filled by serine 410. The tract at residues 674 to 694 (ANTKRQVQTNDNSQTDDNLSD) is disordered. Residues 676–690 (TKRQVQTNDNSQTDD) are compositionally biased toward polar residues.

This sequence in the N-terminal section; belongs to the glycosyltransferase 51 family. In the C-terminal section; belongs to the transpeptidase family. As to quaternary structure, homodimer. May also form higher order oligomers. Self-association may depend on its transmembrane and/or cytoplasmic regions. Interacts with MacP; interaction is required for the function of this protein.

The protein localises to the cell membrane. Its subcellular location is the secreted. It is found in the cell wall. The enzyme catalyses Preferential cleavage: (Ac)2-L-Lys-D-Ala-|-D-Ala. Also transpeptidation of peptidyl-alanyl moieties that are N-acyl substituents of D-alanine.. The catalysed reaction is [GlcNAc-(1-&gt;4)-Mur2Ac(oyl-L-Ala-gamma-D-Glu-L-Lys-D-Ala-D-Ala)](n)-di-trans,octa-cis-undecaprenyl diphosphate + beta-D-GlcNAc-(1-&gt;4)-Mur2Ac(oyl-L-Ala-gamma-D-Glu-L-Lys-D-Ala-D-Ala)-di-trans,octa-cis-undecaprenyl diphosphate = [GlcNAc-(1-&gt;4)-Mur2Ac(oyl-L-Ala-gamma-D-Glu-L-Lys-D-Ala-D-Ala)](n+1)-di-trans,octa-cis-undecaprenyl diphosphate + di-trans,octa-cis-undecaprenyl diphosphate + H(+). The protein operates within cell wall biogenesis; peptidoglycan biosynthesis. Its function is as follows. Cell wall formation. Synthesis of cross-linked peptidoglycan (PG) from the lipid intermediates. Binds dansylated lipid II and catalyzes the polymerization of glycan chains. Hydrolyzes S2d (N-benzoyl-D-alanylmercaptoacetic acid) molecule, a synthetic thiolester analog of cell wall stem peptide. Active against bocillin, a fluorescent penicillin. No transpeptidase activity with non-fluorescent lysine-containing lipid II as substrate. In Streptococcus pneumoniae serotype 2 (strain D39 / NCTC 7466), this protein is Penicillin-binding protein 2a.